A 135-amino-acid polypeptide reads, in one-letter code: Cytochrome b-c1 complex subunit 6, mitochondrial (135 aa).

The disordered stretch occupies residues 1–70 (MSFFRDLLES…ETADPLDTLR (70 aa)). Over residues 19–64 (EPVEDVEVEQPEDAPEEEVSEETVEEEEDDDEDDDEDDEEEEETAD) the composition is skewed to acidic residues.

The protein belongs to the UQCRH/QCR6 family. In terms of assembly, component of the ubiquinol-cytochrome c oxidoreductase (cytochrome b-c1 complex, complex III, CIII), a multisubunit enzyme composed of 10 subunits. The complex is composed of 3 respiratory subunits cytochrome b (COB), cytochrome c1 (CYT1) and Rieske protein (RIP1), 2 core protein subunits COR1 and QCR2, and 5 low-molecular weight protein subunits QCR6, QCR7, QCR8, QCR9 and QCR10. The complex exists as an obligatory dimer and forms supercomplexes (SCs) in the inner mitochondrial membrane with a monomer or a dimer of cytochrome c oxidase (complex IV, CIV), resulting in 2 different assemblies (supercomplexes III(2)IV and III(2)IV(2)).

Its subcellular location is the mitochondrion inner membrane. Its function is as follows. Component of the ubiquinol-cytochrome c oxidoreductase, a multisubunit transmembrane complex that is part of the mitochondrial electron transport chain which drives oxidative phosphorylation. The complex plays an important role in the uptake of multiple carbon sources present in different host niches. The sequence is that of Cytochrome b-c1 complex subunit 6, mitochondrial from Candida albicans (strain SC5314 / ATCC MYA-2876) (Yeast).